The chain runs to 198 residues: Large ribosomal subunit protein uL24c (198 aa).

A chloroplast-targeting transit peptide spans 1 to 50 (MATMSALQSSFTSLSLSPSSSFLGQRLISPISLSVTSPVKPAENPCLVLA).

It belongs to the universal ribosomal protein uL24 family. As to quaternary structure, part of the 50S ribosomal subunit.

The protein localises to the plastid. It localises to the chloroplast. Its function is as follows. One of two assembly initiator proteins, it binds directly to the 5'-end of the 23S rRNA, where it nucleates assembly of the 50S subunit. Required for optimal plastid performance in terms of photosynthesis and growth. Required for the translation of plastid mRNAs. Plays a critical role in biosynthesis of thylakoid membrane proteins encoded by chloroplast genes. The sequence is that of Large ribosomal subunit protein uL24c (RPL24) from Arabidopsis thaliana (Mouse-ear cress).